We begin with the raw amino-acid sequence, 435 residues long: GTPase Obg (435 aa).

In terms of domain architecture, Obg spans 1–159 (MAFIDKCKIV…IEVVLELKTI (159 aa)). Residues 160-329 (ADIGIIGLPN…MLDDVIKIYF (170 aa)) enclose the OBG-type G domain. GTP contacts are provided by residues 166–173 (GLPNAGKS), 191–195 (FTTLN), 212–215 (DIPG), 282–285 (NKID), and 310–312 (SAL). Mg(2+)-binding residues include S173 and T193. The region spanning 355–435 (TPKNKELDKT…IYDITLEFEE (81 aa)) is the OCT domain.

This sequence belongs to the TRAFAC class OBG-HflX-like GTPase superfamily. OBG GTPase family. As to quaternary structure, monomer. Mg(2+) serves as cofactor.

It is found in the cytoplasm. An essential GTPase which binds GTP, GDP and possibly (p)ppGpp with moderate affinity, with high nucleotide exchange rates and a fairly low GTP hydrolysis rate. Plays a role in control of the cell cycle, stress response, ribosome biogenesis and in those bacteria that undergo differentiation, in morphogenesis control. The protein is GTPase Obg of Ureaplasma urealyticum serovar 10 (strain ATCC 33699 / Western).